Here is a 182-residue protein sequence, read N- to C-terminus: Peptidoglycan recognition protein (182 aa).

Residues 1–16 form the signal peptide; that stretch reads MEILFVLFFVFVTVSG. Cystine bridges form between cysteine 18/cysteine 140 and cysteine 54/cysteine 60. The 128-residue stretch at 39–166 folds into the N-acetylmuramoyl-L-alanine amidase domain; it reads RPVELVIIQH…RQLISTESPG (128 aa).

It belongs to the N-acetylmuramoyl-L-alanine amidase 2 family. In terms of assembly, monomer. As to expression, strongly expressed in fat body with weak expression observed in hemocyte. No expression detected in gut.

Its function is as follows. Binds specifically to peptidoglycan and triggers the propenoloxidase cascade which is an important insect innate immune defense mechanism. This chain is Peptidoglycan recognition protein (PGRP), found in Trichoplusia ni (Cabbage looper).